A 251-amino-acid polypeptide reads, in one-letter code: 5-oxoprolinase subunit A 3 (251 aa).

It belongs to the LamB/PxpA family. Forms a complex composed of PxpA, PxpB and PxpC.

It carries out the reaction 5-oxo-L-proline + ATP + 2 H2O = L-glutamate + ADP + phosphate + H(+). In terms of biological role, catalyzes the cleavage of 5-oxoproline to form L-glutamate coupled to the hydrolysis of ATP to ADP and inorganic phosphate. In Pseudomonas aeruginosa (strain ATCC 15692 / DSM 22644 / CIP 104116 / JCM 14847 / LMG 12228 / 1C / PRS 101 / PAO1), this protein is 5-oxoprolinase subunit A 3.